Reading from the N-terminus, the 1286-residue chain is 5-oxoprolinase (1286 aa).

Ser930 and Ser1077 each carry phosphoserine.

Belongs to the oxoprolinase family. As to quaternary structure, homodimer.

Its subcellular location is the cytoplasm. It catalyses the reaction 5-oxo-L-proline + ATP + 2 H2O = L-glutamate + ADP + phosphate + H(+). Functionally, catalyzes the cleavage of 5-oxo-L-proline to form L-glutamate coupled to the hydrolysis of ATP to ADP and inorganic phosphate. This Saccharomyces cerevisiae (strain ATCC 204508 / S288c) (Baker's yeast) protein is 5-oxoprolinase (OXP1).